Here is a 955-residue protein sequence, read N- to C-terminus: Vacuolar membrane protease (955 aa).

Over 1–16 the chain is Cytoplasmic; that stretch reads MASLRLPRANPLAFTR. Residues 17–37 traverse the membrane as a helical segment; it reads WPVTVITAIVYLALLIPLLVV. The Vacuolar segment spans residues 38-390; sequence HHVVPSAPSS…STFVLFQLHT (353 aa). N-linked (GlcNAc...) asparagine glycosylation is found at Asn-53 and Asn-119. Residues His-174 and Asp-186 each coordinate Zn(2+). The active-site Proton acceptor is the Glu-220. Residues Glu-221, Glu-246, and His-319 each contribute to the Zn(2+) site. A helical transmembrane segment spans residues 391 to 411; the sequence is LFALLVTLLIVGPLTLLFTSI. Topologically, residues 412 to 442 are cytoplasmic; it reads ALTKADKMYLFRSSAKSEDRLDVVPLQGLRG. Residues 443-463 traverse the membrane as a helical segment; the sequence is FFRFPFLFGIPTVVTVGLAYL. The Vacuolar portion of the chain corresponds to 464–473; that stretch reads VTKVNPYIIH. A helical membrane pass occupies residues 474 to 494; that stretch reads SSAYAVWSMMVAAWVFLAWFV. Residues 495–508 are Cytoplasmic-facing; the sequence is SRVADFARPSAFHR. A helical membrane pass occupies residues 509–529; sequence IYTLTWMYVLSWVSAVIATVY. At 530–533 the chain is on the vacuolar side; the sequence is ANQR. The chain crosses the membrane as a helical span at residues 534–554; sequence GLAGGYFIFFFHAGIFLAKWI. Topologically, residues 555 to 656 are cytoplasmic; the sequence is SYLELFALPS…WSYALPKWTW (102 aa). Low complexity predominate over residues 574–590; it reads SASGRASGHGSRRGTTS. Residues 574–611 are disordered; it reads SASGRASGHGSRRGTTSGEDDGEEAEEEPTESTSLLGS. Residues 591–603 are compositionally biased toward acidic residues; it reads GEDDGEEAEEEPT. The helical transmembrane segment at 657-677 threads the bilayer; that stretch reads VLQLLLTAPITLIMVGPLALL. The Vacuolar segment spans residues 678–693; it reads TISAISQTGQDGGHPL. The helical transmembrane segment at 694 to 714 threads the bilayer; it reads FAYVAIAIFTTIMLTPLLPFI. At 715–721 the chain is on the cytoplasmic side; the sequence is HRYTYHV. A helical transmembrane segment spans residues 722-742; that stretch reads PLFLLAVFLGTLIYNLVAFPF. Topologically, residues 743 to 955 are vacuolar; sequence SDSNRLKLYY…RRAFEIGNDD (213 aa). N-linked (GlcNAc...) asparagine glycosylation occurs at Asn-826.

The protein belongs to the peptidase M28 family. The cofactor is Zn(2+).

It localises to the vacuole membrane. Functionally, may be involved in vacuolar sorting and osmoregulation. This Aspergillus oryzae (strain ATCC 42149 / RIB 40) (Yellow koji mold) protein is Vacuolar membrane protease.